The chain runs to 295 residues: ATP synthase gamma chain (295 aa).

The protein belongs to the ATPase gamma chain family. F-type ATPases have 2 components, CF(1) - the catalytic core - and CF(0) - the membrane proton channel. CF(1) has five subunits: alpha(3), beta(3), gamma(1), delta(1), epsilon(1). CF(0) has three main subunits: a, b and c.

Its subcellular location is the cell inner membrane. Its function is as follows. Produces ATP from ADP in the presence of a proton gradient across the membrane. The gamma chain is believed to be important in regulating ATPase activity and the flow of protons through the CF(0) complex. This chain is ATP synthase gamma chain, found in Campylobacter curvus (strain 525.92).